Consider the following 273-residue polypeptide: Glutamate racemase (273 aa).

Substrate contacts are provided by residues 7–8 and 39–40; these read DS and YG. The active-site Proton donor/acceptor is Cys70. 71–72 serves as a coordination point for substrate; sequence NT. Cys194 (proton donor/acceptor) is an active-site residue. Residue 195-196 participates in substrate binding; that stretch reads TH.

It belongs to the aspartate/glutamate racemases family.

It catalyses the reaction L-glutamate = D-glutamate. Its pathway is cell wall biogenesis; peptidoglycan biosynthesis. In terms of biological role, provides the (R)-glutamate required for cell wall biosynthesis. The protein is Glutamate racemase of Dinoroseobacter shibae (strain DSM 16493 / NCIMB 14021 / DFL 12).